The following is a 226-amino-acid chain: Cytidylate kinase (226 aa).

Residue 12–20 coordinates ATP; it reads GPSGAGKGT.

The protein belongs to the cytidylate kinase family. Type 1 subfamily.

It is found in the cytoplasm. It catalyses the reaction CMP + ATP = CDP + ADP. The enzyme catalyses dCMP + ATP = dCDP + ADP. The protein is Cytidylate kinase of Xanthomonas campestris pv. campestris (strain 8004).